The primary structure comprises 450 residues: UDP-N-acetylmuramoylalanine--D-glutamate ligase (450 aa).

Position 118-124 (118-124 (GSNGKTT)) interacts with ATP.

It belongs to the MurCDEF family.

It is found in the cytoplasm. The enzyme catalyses UDP-N-acetyl-alpha-D-muramoyl-L-alanine + D-glutamate + ATP = UDP-N-acetyl-alpha-D-muramoyl-L-alanyl-D-glutamate + ADP + phosphate + H(+). It functions in the pathway cell wall biogenesis; peptidoglycan biosynthesis. Cell wall formation. Catalyzes the addition of glutamate to the nucleotide precursor UDP-N-acetylmuramoyl-L-alanine (UMA). In Halalkalibacterium halodurans (strain ATCC BAA-125 / DSM 18197 / FERM 7344 / JCM 9153 / C-125) (Bacillus halodurans), this protein is UDP-N-acetylmuramoylalanine--D-glutamate ligase.